A 64-amino-acid chain; its full sequence is Prokaryotic ubiquitin-like protein UBact (64 aa).

Positions Met-1–Glu-64 are disordered. Residues Arg-22–Glu-64 are compositionally biased toward basic and acidic residues. An Isoglutamyl lysine isopeptide (Glu-Lys) (interchain with K-? in acceptor proteins) cross-link involves residue Glu-64.

This sequence belongs to the ubiquitin-like protein UBact family.

In terms of biological role, may function as a protein modifier covalently attached to lysine residues of substrate proteins. This may serve to target the modified proteins for degradation by proteasomes. This is Prokaryotic ubiquitin-like protein UBact from Leptospirillum ferriphilum (strain ML-04).